We begin with the raw amino-acid sequence, 517 residues long: Tyrosine 3-monooxygenase (517 aa).

Serine 33 carries the post-translational modification Phosphoserine; by PKA. Fe cation-binding residues include histidine 345, histidine 350, and glutamate 390.

This sequence belongs to the biopterin-dependent aromatic amino acid hydroxylase family. The cofactor is Fe(2+).

The protein localises to the cytoplasm. It is found in the perinuclear region. Its subcellular location is the cell projection. It localises to the axon. It carries out the reaction (6R)-L-erythro-5,6,7,8-tetrahydrobiopterin + L-tyrosine + O2 = (4aS,6R)-4a-hydroxy-L-erythro-5,6,7,8-tetrahydrobiopterin + L-dopa. Its pathway is catecholamine biosynthesis; dopamine biosynthesis; dopamine from L-tyrosine: step 1/2. Its activity is regulated as follows. Phosphorylation leads to an increase in the catalytic activity. Involved in the synthesis of catecholamines, such as dopamine. Has a role in serotonin signaling. Required for normal explorative and foraging behavior. This Caenorhabditis briggsae protein is Tyrosine 3-monooxygenase (cat-2).